A 94-amino-acid chain; its full sequence is Co-chaperonin GroES (94 aa).

It belongs to the GroES chaperonin family. Heptamer of 7 subunits arranged in a ring. Interacts with the chaperonin GroEL.

The protein resides in the cytoplasm. Together with the chaperonin GroEL, plays an essential role in assisting protein folding. The GroEL-GroES system forms a nano-cage that allows encapsulation of the non-native substrate proteins and provides a physical environment optimized to promote and accelerate protein folding. GroES binds to the apical surface of the GroEL ring, thereby capping the opening of the GroEL channel. This is Co-chaperonin GroES from Thermoanaerobacter pseudethanolicus (strain ATCC 33223 / 39E) (Clostridium thermohydrosulfuricum).